A 300-amino-acid polypeptide reads, in one-letter code: Dihydroorotate dehydrogenase B (NAD(+)), catalytic subunit (300 aa).

Residues Ser-21 and 45–46 (KS) contribute to the FMN site. Residues Lys-45, 69-73 (NAVGL), and Asn-125 contribute to the substrate site. Asn-125 contacts FMN. The Nucleophile role is filled by Cys-128. Lys-163 and Ile-187 together coordinate FMN. Substrate is bound at residue 188–189 (NT). Residues Gly-213, 239–240 (GG), and 261–262 (GT) each bind FMN.

Belongs to the dihydroorotate dehydrogenase family. Type 1 subfamily. As to quaternary structure, heterotetramer of 2 PyrK and 2 PyrD type B subunits. FMN serves as cofactor.

The protein localises to the cytoplasm. The enzyme catalyses (S)-dihydroorotate + NAD(+) = orotate + NADH + H(+). It participates in pyrimidine metabolism; UMP biosynthesis via de novo pathway; orotate from (S)-dihydroorotate (NAD(+) route): step 1/1. Catalyzes the conversion of dihydroorotate to orotate with NAD(+) as electron acceptor. The sequence is that of Dihydroorotate dehydrogenase B (NAD(+)), catalytic subunit (pyrD) from Thermoplasma acidophilum (strain ATCC 25905 / DSM 1728 / JCM 9062 / NBRC 15155 / AMRC-C165).